The following is a 515-amino-acid chain: Sterol 14-alpha demethylase cyp51A (515 aa).

A helical membrane pass occupies residues 7 to 29 (LTAYMAVAVLTAILLNVVYQLFF). N33 and N269 each carry an N-linked (GlcNAc...) asparagine glycan. A heme-binding site is contributed by C454. N512 is a glycosylation site (N-linked (GlcNAc...) asparagine).

It belongs to the cytochrome P450 family. The cofactor is heme.

The protein resides in the endoplasmic reticulum membrane. The enzyme catalyses a 14alpha-methyl steroid + 3 reduced [NADPH--hemoprotein reductase] + 3 O2 = a Delta(14) steroid + formate + 3 oxidized [NADPH--hemoprotein reductase] + 4 H2O + 4 H(+). It catalyses the reaction a 14alpha-methyl steroid + reduced [NADPH--hemoprotein reductase] + O2 = a 14alpha-hydroxymethyl steroid + oxidized [NADPH--hemoprotein reductase] + H2O + H(+). It carries out the reaction a 14alpha-hydroxymethyl steroid + reduced [NADPH--hemoprotein reductase] + O2 = a 14alpha-formyl steroid + oxidized [NADPH--hemoprotein reductase] + 2 H2O + H(+). The catalysed reaction is a 14alpha-formyl steroid + reduced [NADPH--hemoprotein reductase] + O2 = a Delta(14) steroid + formate + oxidized [NADPH--hemoprotein reductase] + H2O + 2 H(+). The enzyme catalyses lanosterol + 3 reduced [NADPH--hemoprotein reductase] + 3 O2 = 4,4-dimethyl-5alpha-cholesta-8,14,24-trien-3beta-ol + formate + 3 oxidized [NADPH--hemoprotein reductase] + 4 H2O + 4 H(+). It catalyses the reaction lanosterol + reduced [NADPH--hemoprotein reductase] + O2 = 32-hydroxylanosterol + oxidized [NADPH--hemoprotein reductase] + H2O + H(+). It carries out the reaction 32-hydroxylanosterol + reduced [NADPH--hemoprotein reductase] + O2 = 32-oxolanosterol + oxidized [NADPH--hemoprotein reductase] + 2 H2O + H(+). The catalysed reaction is 32-oxolanosterol + reduced [NADPH--hemoprotein reductase] + O2 = 4,4-dimethyl-5alpha-cholesta-8,14,24-trien-3beta-ol + formate + oxidized [NADPH--hemoprotein reductase] + H2O + 2 H(+). The enzyme catalyses eburicol + 3 reduced [NADPH--hemoprotein reductase] + 3 O2 = 14-demethyleburicol + formate + 3 oxidized [NADPH--hemoprotein reductase] + 4 H2O + 4 H(+). It catalyses the reaction eburicol + reduced [NADPH--hemoprotein reductase] + O2 = 32-hydroxyeburicol + oxidized [NADPH--hemoprotein reductase] + H2O + H(+). It carries out the reaction 32-hydroxyeburicol + reduced [NADPH--hemoprotein reductase] + O2 = 32-oxoeburicol + oxidized [NADPH--hemoprotein reductase] + 2 H2O + H(+). The catalysed reaction is 32-oxoeburicol + reduced [NADPH--hemoprotein reductase] + O2 = 14-demethyleburicol + formate + oxidized [NADPH--hemoprotein reductase] + H2O + 2 H(+). It functions in the pathway steroid metabolism; ergosterol biosynthesis. The sterol 14-alpha demethylase activity is inhibited by azole compounds. Activity is inhibited by the novel and long-acting fungicidal azole, PC1244. Sterol 14alpha-demethylase, encoded by cyp51A and cyp51B, that plays a critical role in the third module of ergosterol biosynthesis pathway, being ergosterol the major sterol component in fungal membranes that participates in a variety of functions. The third module or late pathway involves the ergosterol synthesis itself through consecutive reactions that mainly occur in the endoplasmic reticulum (ER) membrane. In filamentous fungi, during the initial step of this module, lanosterol (lanosta-8,24-dien-3beta-ol) can be metabolized to eburicol. Sterol 14alpha-demethylase catalyzes the three-step oxidative removal of the 14alpha-methyl group (C-32) of both these sterols in the form of formate, and converts eburicol and lanosterol to 14-demethyleburicol (4,4,24-trimethylergosta-8,14,24(28)-trienol) and 4,4-dimethyl-5alpha-cholesta-8,14,24-trien-3beta-ol, respectively, which are further metabolized by other enzymes in the pathway to ergosterol. Can also use substrates not intrinsic to fungi, such as 24,25-dihydrolanosterol (DHL), producing 4,4'-dimethyl-8,14-cholestadien-3-beta-ol, but at lower rates than the endogenous substrates. Functionally, as a target of azole drugs, plays a crucial role in azole susceptibility. In Aspergillus fumigatus (strain ATCC MYA-4609 / CBS 101355 / FGSC A1100 / Af293) (Neosartorya fumigata), this protein is Sterol 14-alpha demethylase cyp51A.